Consider the following 519-residue polypeptide: Protein nucleotidyltransferase YdiU (519 aa).

The ATP site is built by Gly-101, Gly-103, Arg-104, Lys-124, Asp-136, Gly-137, Arg-194, and Arg-201. Residue Asp-271 is the Proton acceptor of the active site. Positions 272 and 281 each coordinate Mg(2+). Asp-281 lines the ATP pocket.

It belongs to the SELO family. It depends on Mg(2+) as a cofactor. Mn(2+) serves as cofactor.

The catalysed reaction is L-seryl-[protein] + ATP = 3-O-(5'-adenylyl)-L-seryl-[protein] + diphosphate. It carries out the reaction L-threonyl-[protein] + ATP = 3-O-(5'-adenylyl)-L-threonyl-[protein] + diphosphate. It catalyses the reaction L-tyrosyl-[protein] + ATP = O-(5'-adenylyl)-L-tyrosyl-[protein] + diphosphate. The enzyme catalyses L-histidyl-[protein] + UTP = N(tele)-(5'-uridylyl)-L-histidyl-[protein] + diphosphate. The catalysed reaction is L-seryl-[protein] + UTP = O-(5'-uridylyl)-L-seryl-[protein] + diphosphate. It carries out the reaction L-tyrosyl-[protein] + UTP = O-(5'-uridylyl)-L-tyrosyl-[protein] + diphosphate. Its function is as follows. Nucleotidyltransferase involved in the post-translational modification of proteins. It can catalyze the addition of adenosine monophosphate (AMP) or uridine monophosphate (UMP) to a protein, resulting in modifications known as AMPylation and UMPylation. This is Protein nucleotidyltransferase YdiU from Azoarcus sp. (strain BH72).